The primary structure comprises 1044 residues: Pre-mRNA-splicing factor ATP-dependent RNA helicase DEAH1 (1044 aa).

A disordered region spans residues 106 to 206; sequence EVVVEKKSSV…TLSKKEKEEA (101 aa). Basic and acidic residues predominate over residues 108–121; that stretch reads VVEKKSSVSESRKS. The span at 122 to 132 shows a compositional bias: basic residues; the sequence is DKGKKRFRKKS. A phosphoserine mark is found at serine 135 and serine 138. Residues 157 to 166 show a composition bias toward acidic residues; sequence EEDDGSESEE. Residues 167–206 are compositionally biased toward basic and acidic residues; that stretch reads ERVRDQKEREELEQHLKDRDTARTRKLTEQTLSKKEKEEA. One can recognise a Helicase ATP-binding domain in the interval 414 to 577; that stretch reads LKAVEEHQVL…FDTAPIFSFP (164 aa). 427–434 is a binding site for ATP; the sequence is GDTGSGKT. The DEAH box motif lies at 524–527; it reads DEAH. The region spanning 600-775 is the Helicase C-terminal domain; the sequence is IVTILTIHVR…SVVLALKSLG (176 aa).

This sequence belongs to the DEAD box helicase family. DEAH subfamily. PRP2 sub-subfamily. In terms of tissue distribution, widely expressed.

It catalyses the reaction ATP + H2O = ADP + phosphate + H(+). Its function is as follows. Involved in pre-mRNA splicing. The protein is Pre-mRNA-splicing factor ATP-dependent RNA helicase DEAH1 of Arabidopsis thaliana (Mouse-ear cress).